The sequence spans 104 residues: Iron-sulfur cluster assembly protein CyaY (104 aa).

Belongs to the frataxin family.

Functionally, involved in iron-sulfur (Fe-S) cluster assembly. May act as a regulator of Fe-S biogenesis. This Aeromonas hydrophila subsp. hydrophila (strain ATCC 7966 / DSM 30187 / BCRC 13018 / CCUG 14551 / JCM 1027 / KCTC 2358 / NCIMB 9240 / NCTC 8049) protein is Iron-sulfur cluster assembly protein CyaY.